Reading from the N-terminus, the 205-residue chain is Ras-related protein RABC2b (205 aa).

20–27 (GDSGVGKS) provides a ligand contact to GTP. The short motif at 41-49 (LAPTIGVDF) is the Effector region element. GTP contacts are provided by residues 67 to 71 (DTAGQ), 127 to 130 (NKVD), and 157 to 158 (SA). S-geranylgeranyl cysteine attachment occurs at residues Cys202 and Cys203.

The protein belongs to the small GTPase superfamily. Rab family.

The protein resides in the cell membrane. Intracellular vesicle trafficking and protein transport. The protein is Ras-related protein RABC2b (RABC2B) of Arabidopsis thaliana (Mouse-ear cress).